Here is a 238-residue protein sequence, read N- to C-terminus: uncharacterized protein (238 aa).

The Response regulatory domain occupies 3–116; that stretch reads RVIIVDDEQP…RLAKTLTRLS (114 aa). At Asp54 the chain carries 4-aspartylphosphate. Residues 136 to 237 form the HTH LytTR-type domain; the sequence is IPCSGHNRIF…LKSLKEKLGI (102 aa).

This is an uncharacterized protein from Yersinia pestis.